The sequence spans 517 residues: Protein ERGIC-53 (517 aa).

An N-terminal signal peptide occupies residues 1–30 (MAVSRRRGPQAGAQSFFCALLLSFSQFVGS). Residues 31-484 (DGMGGDAAAP…DLPAFPSCLS (454 aa)) are Lumenal-facing. An L-type lectin-like domain is found at 52–275 (RRFEYKYSFK…DVLSFLTFQL (224 aa)). Residues Ser-96 and Asp-129 each contribute to the a carbohydrate site. Ca(2+)-binding residues include Asp-160, Phe-162, Asp-163, Asn-164, Asp-165, Asn-169, and Asn-170. Asn-164 is a binding site for a carbohydrate. His-186 provides a ligand contact to a carbohydrate. Asp-189 lines the Ca(2+) pocket. Residues Cys-198 and Cys-238 are joined by a disulfide bond. A carbohydrate is bound at residue 259–261 (GGL). 2 disordered regions span residues 276–297 (TEPGKEPPTPEKDISEKEKEKY) and 377–396 (EISRRGAGTPGQPGQVSQQE). Positions 278 to 297 (PGKEPPTPEKDISEKEKEKY) are enriched in basic and acidic residues. Ser-433 carries the phosphoserine modification. Residues 485 to 505 (TVHFVIFIVVQTVLFIGYIMY) traverse the membrane as a helical segment. The Cytoplasmic portion of the chain corresponds to 506-517 (RTQQEAAAKKFF). Positions 506 to 517 (RTQQEAAAKKFF) are mediates interaction with RAB3GAP1, RAB3GAP2 and UBXN6. An ER export motif motif is present at residues 516 to 517 (FF).

Exists both as a covalent disulfide-linked homohexamer, and a complex of three disulfide-linked dimers non-covalently kept together. Interacts with MCFD2. May interact with TMEM115. Interacts with RAB3GAP1 and RAB3GAP2. Interacts with UBXN6. Interacts with SERPINA1/alpha1-antitrypsin. Interacts with BET1.

The protein localises to the endoplasmic reticulum-Golgi intermediate compartment membrane. Its subcellular location is the golgi apparatus membrane. The protein resides in the endoplasmic reticulum membrane. Its function is as follows. Mannose-specific lectin. May recognize sugar residues of glycoproteins, glycolipids, or glycosylphosphatidyl inositol anchors and may be involved in the sorting or recycling of proteins, lipids, or both. The LMAN1-MCFD2 complex forms a specific cargo receptor for the ER-to-Golgi transport of selected proteins. The sequence is that of Protein ERGIC-53 (Lman1) from Rattus norvegicus (Rat).